The following is a 491-amino-acid chain: Lysosomal Pro-X carboxypeptidase (491 aa).

Residues 1-17 form the signal peptide; that stretch reads MGCRALLLLSFLLLGAA. Positions 18-43 are excised as a propeptide; the sequence is TTIPPRLKTLGSPHLSASPTPDPAVA. A glycan (N-linked (GlcNAc...) asparagine) is linked at N99. The Charge relay system role is filled by S177. An SKS domain region spans residues 192 to 332; it reads HIVVGALAAS…QNIFQALSVY (141 aa). Disulfide bonds link C213/C370, C231/C308, C262/C341, and C362/C392. 3 N-linked (GlcNAc...) asparagine glycosylation sites follow: N315, N334, and N343. N413 is a glycosylation site (N-linked (GlcNAc...) asparagine). Active-site charge relay system residues include D428 and H453.

This sequence belongs to the peptidase S28 family. In terms of assembly, homodimer.

It is found in the lysosome. It catalyses the reaction Cleavage of a -Pro-|-Xaa bond to release a C-terminal amino acid.. Functionally, cleaves C-terminal amino acids linked to proline in peptides such as angiotensin II, III and des-Arg9-bradykinin. This cleavage occurs at acidic pH, but enzymatic activity is retained with some substrates at neutral pH. The sequence is that of Lysosomal Pro-X carboxypeptidase (Prcp) from Mus musculus (Mouse).